A 327-amino-acid polypeptide reads, in one-letter code: Probable cell division protein WhiA (327 aa).

Positions 275–308 form a DNA-binding region, H-T-H motif; that stretch reads SLEELGRLADPPMTKDAVAGRIRRLLSMADRKAK. The interval 304–327 is disordered; that stretch reads DRKAKQDGIPDTESAVTPDLLEDA.

The protein belongs to the WhiA family.

Involved in cell division and chromosome segregation. This is Probable cell division protein WhiA from Mycobacterium sp. (strain MCS).